A 153-amino-acid polypeptide reads, in one-letter code: FAD synthase (153 aa).

Residues 9–10 (TF), 14–17 (HPGH), and Asp-92 each bind ATP.

Belongs to the archaeal FAD synthase family. As to quaternary structure, homodimer. A divalent metal cation is required as a cofactor.

It catalyses the reaction FMN + ATP + H(+) = FAD + diphosphate. It participates in cofactor biosynthesis; FAD biosynthesis; FAD from FMN: step 1/1. Catalyzes the transfer of the AMP portion of ATP to flavin mononucleotide (FMN) to produce flavin adenine dinucleotide (FAD) coenzyme. This chain is FAD synthase, found in Halorubrum lacusprofundi (strain ATCC 49239 / DSM 5036 / JCM 8891 / ACAM 34).